Here is a 149-residue protein sequence, read N- to C-terminus: Histone H2A (149 aa).

Over residues 1–23 (METAGKAKKGFGGRKGGPRKKSV) the composition is skewed to basic residues. 2 disordered regions span residues 1–25 (META…SVTR) and 127–149 (KTAE…PKKA). The span at 127–138 (KTAEKAAKEPKS) shows a compositional bias: basic and acidic residues. 2 consecutive short sequence motifs (SPKK motif) follow at residues 138–141 (SPSK) and 145–148 (SPKK).

Belongs to the histone H2A family. In terms of assembly, the nucleosome is a histone octamer containing two molecules each of H2A, H2B, H3 and H4 assembled in one H3-H4 heterotetramer and two H2A-H2B heterodimers. The octamer wraps approximately 147 bp of DNA.

It localises to the nucleus. The protein resides in the chromosome. In terms of biological role, core component of nucleosome. Nucleosomes wrap and compact DNA into chromatin, limiting DNA accessibility to the cellular machineries which require DNA as a template. Histones thereby play a central role in transcription regulation, DNA repair, DNA replication and chromosomal stability. DNA accessibility is regulated via a complex set of post-translational modifications of histones, also called histone code, and nucleosome remodeling. This is Histone H2A from Petroselinum crispum (Parsley).